The following is a 368-amino-acid chain: Ribulose bisphosphate carboxylase-like protein 1 (368 aa).

Belongs to the RuBisCO large chain family. Type IV subfamily.

Functionally, unknown. Probably does not have RuBisCO activity. In Rhodopseudomonas palustris (strain ATCC BAA-98 / CGA009), this protein is Ribulose bisphosphate carboxylase-like protein 1 (rlp1).